A 1201-amino-acid polypeptide reads, in one-letter code: Coatomer subunit alpha (1201 aa).

WD repeat units lie at residues 9–39 (SKSTRAKGIAFHPSRPWVLVALFSSTIQLWD), 51–81 (DHEGPVRGLDFHPTQPIFVSAGDDYTIKVWS), 93–123 (GHLDYVRTVFFHRELPWIISASDDQTIRIWN), 135–165 (GHNHFVMCAQFHPTDDLIVSASLDETIRIWD), 207–237 (GHTRGVNWASFHPTLPLIVSGSDDRQVKLWR), and 251–281 (GHTNNVDSVIFHPHQNLIISVGEDKTLRVWD). A disordered region spans residues 842–862 (AVNTTQEQEEPLGEENFNDED). Acidic residues predominate over residues 848–862 (EQEEPLGEENFNDED).

In terms of assembly, oligomeric complex that consists of at least the alpha, beta, beta', gamma, delta, epsilon and zeta subunits. Interacts with the ESCRT-0 subunit VPS27. Interacts with KEI1 (via C-terminal region).

It is found in the cytoplasm. The protein resides in the golgi apparatus membrane. The protein localises to the cytoplasmic vesicle. Its subcellular location is the COPI-coated vesicle membrane. Its function is as follows. The coatomer is a cytosolic protein complex that binds to dilysine motifs and reversibly associates with Golgi non-clathrin-coated vesicles, which further mediate biosynthetic protein transport from the ER, via the Golgi up to the trans Golgi network. Coatomer complex is required for budding from Golgi membranes, and is essential for the retrograde Golgi-to-ER transport of dilysine-tagged proteins. The protein is Coatomer subunit alpha (COP1) of Saccharomyces cerevisiae (strain ATCC 204508 / S288c) (Baker's yeast).